We begin with the raw amino-acid sequence, 343 residues long: Methylthioribose-1-phosphate isomerase (343 aa).

Residues 44–46 (RGA), R85, and Q192 contribute to the substrate site. Catalysis depends on D233, which acts as the Proton donor. Position 243–244 (243–244 (NK)) interacts with substrate.

Belongs to the eIF-2B alpha/beta/delta subunits family. MtnA subfamily.

The catalysed reaction is 5-(methylsulfanyl)-alpha-D-ribose 1-phosphate = 5-(methylsulfanyl)-D-ribulose 1-phosphate. The protein operates within amino-acid biosynthesis; L-methionine biosynthesis via salvage pathway; L-methionine from S-methyl-5-thio-alpha-D-ribose 1-phosphate: step 1/6. Functionally, catalyzes the interconversion of methylthioribose-1-phosphate (MTR-1-P) into methylthioribulose-1-phosphate (MTRu-1-P). The polypeptide is Methylthioribose-1-phosphate isomerase (Carboxydothermus hydrogenoformans (strain ATCC BAA-161 / DSM 6008 / Z-2901)).